The chain runs to 308 residues: Olfactory receptor 4E2 (308 aa).

The Extracellular portion of the chain corresponds to 1-24 (MGALNQTRVTEFIFLGLTDNWVLE). N-linked (GlcNAc...) asparagine glycosylation is present at Asn-5. A helical transmembrane segment spans residues 25-45 (ILFFVPFTVTYMLTLLGNFLI). Topologically, residues 46 to 57 (VVTIVFTPRLHN) are cytoplasmic. Residues 58-78 (PMYFFLSNLSFIDICHSSVTV) form a helical membrane-spanning segment. The Extracellular portion of the chain corresponds to 79–97 (PKMLEGLLLERKTISFDNC). Cysteines 97 and 179 form a disulfide. A helical membrane pass occupies residues 98 to 118 (IAQLFFLHLFACSEIFLLTIM). Residues His-105 and Cys-109 each contribute to the Cu cation site. Residues 119 to 143 (AYDRYVAICIPLHYSNVMNMKVCVQ) are Cytoplasmic-facing. The helical transmembrane segment at 144-164 (LVFALWLGGTIHSLVQTFLTI) threads the bilayer. Topologically, residues 165-204 (RLPYCGPNIIDSYFCDVPPVIKLACTDTYLTGILIVSNSG) are extracellular. The helical transmembrane segment at 205-225 (TISLVCFLALVTSYTVILFSL) threads the bilayer. Over 226 to 236 (RKQSAEGRRKA) the chain is Cytoplasmic. A helical membrane pass occupies residues 237–257 (LSTCSAHFMVVALFFGPCIFL). Over 258–268 (YTRPDSSFSID) the chain is Extracellular. Arg-260 lines the Cu cation pocket. A helical membrane pass occupies residues 269 to 289 (KVVSVFYTVVTPLLNPLIYTL). At 290 to 308 (RNEEVKTAMKHLRQRRICS) the chain is on the cytoplasmic side.

Belongs to the G-protein coupled receptor 1 family. As to expression, expressed in olfactory epithelium, specifically in the olfactory sensory neurons of the septal organ.

It is found in the cell membrane. With respect to regulation, copper binding enhances receptor activity in response to odorant binding. In terms of biological role, olfactory receptor that is activated by the binding of organosulfur odorants with thioether groups such as (methylthio)methanethiol (MTMT) and bis(methylthiomethyl) disulfide. Also binds odorants cis-cyclooctene and tert-butyl mercaptan. The activity of this receptor is mediated by G proteins which activate adenylyl cyclase (Potential). This Mus musculus (Mouse) protein is Olfactory receptor 4E2.